Here is a 463-residue protein sequence, read N- to C-terminus: Probable mannan endo-1,4-beta-mannosidase F (463 aa).

The signal sequence occupies residues 1-18 (MRSLSSIALLSVVGAASA). A CBM1 domain is found at 19–54 (QAGPWAQCGGKSFSGSSECASGWKCQELNEWFSQCV). The interval 57–78 (AESTTPTVSSTPTPTDAPSVSI) is disordered. Over residues 59–77 (STTPTVSSTPTPTDAPSVS) the composition is skewed to low complexity. The ser-rich linker stretch occupies residues 75 to 118 (SVSITASATTGINKSISVSSASKSTPLPSSSSASPSPRPTGSGS). A glycan (N-linked (GlcNAc...) asparagine) is linked at N87. Low complexity predominate over residues 93–118 (SSASKSTPLPSSSSASPSPRPTGSGS). Residues 93-121 (SSASKSTPLPSSSSASPSPRPTGSGSFAK) form a disordered region. Positions 119-463 (FAKADGLQFS…MDHMENVNKN (345 aa)) are catalytic. Substrate-binding residues include W171 and N285. E286 acts as the Proton donor in catalysis. Y361 contacts substrate. E395 serves as the catalytic Nucleophile. Substrate is bound at residue W424.

The protein belongs to the glycosyl hydrolase 5 (cellulase A) family.

Its subcellular location is the secreted. The catalysed reaction is Random hydrolysis of (1-&gt;4)-beta-D-mannosidic linkages in mannans, galactomannans and glucomannans.. In terms of biological role, endo-1,4-mannanase, a crucial enzyme for depolymerization of seed galactomannans and wood galactoglucomannans. The chain is Probable mannan endo-1,4-beta-mannosidase F (manF) from Aspergillus flavus (strain ATCC 200026 / FGSC A1120 / IAM 13836 / NRRL 3357 / JCM 12722 / SRRC 167).